Here is a 351-residue protein sequence, read N- to C-terminus: Molybdate-binding protein MolA (351 aa).

An N-terminal signal peptide occupies residues 1–21 (MKLKSLLIACLLSSLSFSALA). Residues 41–322 (RAVVLQHQTL…WLAKALYPQR (282 aa)) enclose the Fe/B12 periplasmic-binding domain. Residues 47-48 (HQ), tyrosine 217, arginine 264, and 300-301 (GY) each bind molybdate.

Belongs to the bacterial solute-binding protein 8 family. In terms of assembly, the complex is composed of two ATP-binding proteins (MolC), two transmembrane proteins (MolB) and a solute-binding protein (MolA).

Its subcellular location is the periplasm. The MolBCA complex shows a decrease in affinity in the presence of increasing concentrations of substrate and nucleotide. Part of the ABC transporter complex MolBCA involved in molybdate import. Functions as a low-affinity molybdate transporter. Binds to both molybdate and tungstate, but not to sulfate or phosphate. This is Molybdate-binding protein MolA from Haemophilus influenzae (strain ATCC 51907 / DSM 11121 / KW20 / Rd).